Consider the following 498-residue polypeptide: MDETEWIHRHPKAEDLRVGLISWAGTYLTFEACKNTVTATAKSLGRRQTWEILVSNEHETQAVVRLKSVQGLYLLCECDGTVCYGRPRTSHHGCFLLRFHRNSKWTLQCLISGRYLESNGKDVFCTSHVLSAYHMWTPRPALHVHVILYSPIHRCYARADPTMGRIWVDAAVPCLEECGFLLHFRDGCYHLETSTHHFLSHVDRLFSQPSSQTAFHMQVRPGGLVALCDGEGGMLYPQGTHLLLGMGCNPMRGEEWFILQHCPTWVSLRSKTGRFISVIYDGEVRAASERLNRMSLFQFECDSESPTVQLRSANGYYLSQRRHRAVMADGHPLESDTFFRMHWNCGRIILQSCRGRFLGIAPNSLLMANVILPGPNEEFGILFANRSFLVLRGRYGYVGSSSGHDLIQCNQDQPDRIHLLPCRPGIYHFQAQGGSFWSITSFGTFRPWGKFALNFCIELQGSNLLTVLAPNGFYMRADQSGTLLADSEDITRECIWEF.

Belongs to the fascin family. In terms of tissue distribution, expressed in testis.

The protein localises to the cytoplasm. It is found in the cytoskeleton. Its function is as follows. Acts as an actin bundling protein. This chain is Fascin-3 (FSCN3), found in Homo sapiens (Human).